The following is a 92-amino-acid chain: Small ribosomal subunit protein uS19c (92 aa).

It belongs to the universal ribosomal protein uS19 family.

It localises to the plastid. Its subcellular location is the chloroplast. In terms of biological role, protein S19 forms a complex with S13 that binds strongly to the 16S ribosomal RNA. This chain is Small ribosomal subunit protein uS19c (rps19), found in Pisum sativum (Garden pea).